A 472-amino-acid chain; its full sequence is UDP-glucuronosyltransferase (472 aa).

N-linked (GlcNAc...) asparagine glycans are attached at residues Asn-59, Asn-227, and Asn-377. A helical membrane pass occupies residues 436–456 (FGFILLILLTVLWVTLKCCLF).

This sequence belongs to the UDP-glycosyltransferase family.

The protein resides in the microsome membrane. The protein localises to the endoplasmic reticulum membrane. It carries out the reaction glucuronate acceptor + UDP-alpha-D-glucuronate = acceptor beta-D-glucuronoside + UDP + H(+). UDPGT is of major importance in the conjugation and subsequent elimination of potentially toxic xenobiotics and endogenous compounds. This chain is UDP-glucuronosyltransferase (ugt3), found in Pleuronectes platessa (European plaice).